Consider the following 1117-residue polypeptide: DNA polymerase II large subunit (1117 aa).

Basic and acidic residues predominate over residues 279-294; it reads STKEEEKKKEESSENK. Residues 279-299 form a disordered region; sequence STKEEEKKKEESSENKPKKKA.

This sequence belongs to the archaeal DNA polymerase II family. As to quaternary structure, heterodimer of a large subunit and a small subunit.

The enzyme catalyses DNA(n) + a 2'-deoxyribonucleoside 5'-triphosphate = DNA(n+1) + diphosphate. The catalysed reaction is Exonucleolytic cleavage in the 3'- to 5'-direction to yield nucleoside 5'-phosphates.. In terms of biological role, possesses two activities: a DNA synthesis (polymerase) and an exonucleolytic activity that degrades single-stranded DNA in the 3'- to 5'-direction. Has a template-primer preference which is characteristic of a replicative DNA polymerase. This Methanosphaera stadtmanae (strain ATCC 43021 / DSM 3091 / JCM 11832 / MCB-3) protein is DNA polymerase II large subunit.